Reading from the N-terminus, the 274-residue chain is uncharacterized protein (274 aa).

The interval 253 to 274 (QTGDVRTTEGTALTDDTTKRNI) is disordered.

This is an uncharacterized protein from Deinococcus radiodurans (strain ATCC 13939 / DSM 20539 / JCM 16871 / CCUG 27074 / LMG 4051 / NBRC 15346 / NCIMB 9279 / VKM B-1422 / R1).